The primary structure comprises 292 residues: E3 ubiquitin-protein ligase RNF144A (292 aa).

The TRIAD supradomain stretch occupies residues proline 16–leucine 236. Positions 20, 23, 43, 46, 111, 116, 135, 138, 143, 146, 151, 156, 185, and 188 each coordinate Zn(2+). An RING-type 1 zinc finger spans residues cysteine 20–cysteine 70. The IBR-type zinc finger occupies glutamine 91–cysteine 156. An RING-type 2; atypical zinc finger spans residues cysteine 185 to cysteine 214. Cysteine 198 is a catalytic residue. Residues cysteine 203, cysteine 206, cysteine 211, cysteine 214, histidine 226, and cysteine 232 each coordinate Zn(2+). A helical transmembrane segment spans residues valine 250–leucine 270.

The protein belongs to the RBR family. RNF144 subfamily. Self-associates. Interacts with UBE2L3. In terms of processing, autoubiquitinated.

It localises to the cell membrane. Its subcellular location is the cytoplasmic vesicle membrane. It catalyses the reaction [E2 ubiquitin-conjugating enzyme]-S-ubiquitinyl-L-cysteine + [acceptor protein]-L-lysine = [E2 ubiquitin-conjugating enzyme]-L-cysteine + [acceptor protein]-N(6)-ubiquitinyl-L-lysine.. The protein operates within protein modification; protein ubiquitination. Functionally, E3 ubiquitin-protein ligase which accepts ubiquitin from E2 ubiquitin-conjugating enzymes UBE2L3 and UBE2L6 in the form of a thioester and then directly transfers the ubiquitin to targeted substrates. Mediates the ubiquitination and degradation of the DNA damage kinase PRKDC during DNA damage. Positively regulates DNA virus or exogenous cytosolic DNA-triggered innate immune response by mediating STING1 ubiquitination and increasing its 'Lys-6'-linked ubiquitination and translocation from the endoplasmic reticulum to the Golgi leading to downstream signaling pathways. Plays a positive role in EGF-dependent cell proliferation by prolonging EGF/EGFR signaling during EGF stimulation through EGFR ubiquitination. Increases ERK activity independently of EGFR signaling by promoting polyubiquitination and subsequent degradation of VRK3 in the cytosol. In Mus musculus (Mouse), this protein is E3 ubiquitin-protein ligase RNF144A (Rnf144a).